The sequence spans 401 residues: E3 ubiquitin-protein ligase RGLG4 (401 aa).

Residues 1-43 are disordered; the sequence is MTMGNFLKRFGSGKSRSSRNMTLGTTSSQSHEPSPSDPSLSLA. Over residues 8 to 19 the composition is skewed to low complexity; sequence KRFGSGKSRSSR. The span at 20–32 shows a compositional bias: polar residues; it reads NMTLGTTSSQSHE. One can recognise a VWFA domain in the interval 79 to 299; it reads NLILGVDFTK…KETAFALAAL (221 aa). The tract at residues 326 to 350 is disordered; the sequence is VPRPPPIPYTPPTNAELPSTASPAS. Over residues 327-336 the composition is skewed to pro residues; that stretch reads PRPPPIPYTP. Positions 341–350 are enriched in polar residues; the sequence is ELPSTASPAS. Residues 357-390 form an RING-type zinc finger; that stretch reads CPICLTNRKDVAFSCGHMTCGDCGSKISNCPICR.

Interacts with UBC30, GRXS17 and GLB3. As to expression, widely expressed.

The protein localises to the cytoplasm. It localises to the nucleus. The catalysed reaction is S-ubiquitinyl-[E2 ubiquitin-conjugating enzyme]-L-cysteine + [acceptor protein]-L-lysine = [E2 ubiquitin-conjugating enzyme]-L-cysteine + N(6)-ubiquitinyl-[acceptor protein]-L-lysine.. Functionally, possesses E3 ubiquitin-protein ligase in vitro. Acts as upstream modulator of jasmonate (JA) signaling in response to various stimuli, such as JA-inhibited root growth, JA-inductive gene expression, coronatine-mediated pathogen susceptibility, wound-stimulated expression of JA-responsive genes and wound-induced JA biosynthesis. Controls fumonisin B1 (FB1)-triggered programmed cell death (PCD) by modulating the JA signaling pathway. May mediate salicylic acid (SA) suppression of JA signaling in FB1-induced responses. May mediate the formation of 'Lys-48'-linked multiubiquitin chains. Mediates the polyubiquitination and subsequent proteasomal degradation of the target protein GRXS17. This chain is E3 ubiquitin-protein ligase RGLG4, found in Arabidopsis thaliana (Mouse-ear cress).